A 313-amino-acid chain; its full sequence is Pyrimidine-specific ribonucleoside hydrolase RihB (313 aa).

The active-site Proton acceptor is the Asp-11. Ca(2+) contacts are provided by Asp-11, Asp-16, and Val-124. Substrate is bound by residues Gln-227 and His-239. Asp-240 serves as a coordination point for Ca(2+).

The protein belongs to the IUNH family. RihB subfamily. In terms of assembly, homotetramer. Requires Ca(2+) as cofactor.

It carries out the reaction a pyrimidine ribonucleoside + H2O = a pyrimidine nucleobase + D-ribose. Functionally, hydrolyzes cytidine or uridine to ribose and cytosine or uracil, respectively. Has a clear preference for cytidine over uridine. Strictly specific for ribonucleosides. This is Pyrimidine-specific ribonucleoside hydrolase RihB from Escherichia coli (strain SE11).